Here is a 153-residue protein sequence, read N- to C-terminus: SKP1-like protein 9 (153 aa).

Residues 95-153 (IKAANYLNIKSLFDLACQTVAEIIKGNTPEQIREFFNIENDLTPEEEAAIRRENKWAFE) form an interaction with the F-box domain of F-box proteins region.

Belongs to the SKP1 family. In terms of assembly, part of a SCF (SKP1-cullin-F-box) protein ligase complex. Interacts with CPR1/CPR30 and At3g61590. Expressed in leaves, shoot apical meristem (SAM), roots, flowers and pollen.

The protein resides in the nucleus. Its pathway is protein modification; protein ubiquitination. Its function is as follows. Involved in ubiquitination and subsequent proteasomal degradation of target proteins. Together with CUL1, RBX1 and a F-box protein, it forms a SCF E3 ubiquitin ligase complex. The functional specificity of this complex depends on the type of F-box protein. In the SCF complex, it serves as an adapter that links the F-box protein to CUL1. The chain is SKP1-like protein 9 (ASK9) from Arabidopsis thaliana (Mouse-ear cress).